The sequence spans 543 residues: UBP9-binding protein bun62 (543 aa).

Position 43 is a phosphoserine (Ser43). 5 WD repeats span residues 239–279 (LNSS…QPLH), 320–361 (FSKS…DVFH), 362–401 (SYFA…LVAR), 404–448 (GHKS…IHRP), and 513–542 (VDDS…TWQR).

Interacts with ubp9 and bun107.

It is found in the nucleus. The protein resides in the cytoplasm. The protein localises to the cell tip. In terms of biological role, required for the ubp9 recruitment to septa and cell tips but also for its enzymatic activity at these specific locations. This is UBP9-binding protein bun62 (bun62) from Schizosaccharomyces pombe (strain 972 / ATCC 24843) (Fission yeast).